Reading from the N-terminus, the 192-residue chain is Erythropoietin (192 aa).

Positions 1–26 (MGVPERPTLLLLLSLLLIPLGLPVLC) are cleaved as a signal peptide. Cysteines 33 and 187 form a disulfide. N-linked (GlcNAc...) asparagine glycans are attached at residues N50, N64, and N109.

Belongs to the EPO/TPO family. In terms of tissue distribution, produced by kidney or liver of adult mammals and by liver of fetal or neonatal mammals.

It is found in the secreted. Hormone involved in the regulation of erythrocyte proliferation and differentiation and the maintenance of a physiological level of circulating erythrocyte mass. Binds to EPOR leading to EPOR dimerization and JAK2 activation thereby activating specific downstream effectors, including STAT1 and STAT3. This is Erythropoietin (Epo) from Rattus norvegicus (Rat).